A 301-amino-acid chain; its full sequence is uncharacterized protein (301 aa).

Residues 1–25 form the signal peptide; sequence MKFKNTLSIFKILIILFSFYNVAFS. Topologically, residues 26 to 279 are extracellular; it reads DDTEKYTFKG…STTGSKDSST (254 aa). Residues 174–281 form a disordered region; the sequence is LYTGSSNTPN…TGSKDSSTGN (108 aa). Asn-191, Asn-212, Asn-234, and Asn-241 each carry an N-linked (GlcNAc...) asparagine glycan. Low complexity predominate over residues 204-234; the sequence is SSSDSTNSNSSSTDTASSSPSSSPSSSPSPN. The segment covering 254-281 has biased composition (low complexity); that stretch reads GGVETSTAGSSTGTTSSTTGSKDSSTGN. Residues 280–300 form a helical membrane-spanning segment; sequence GNSILPTLIIVTFFVLTLVIM. Residue Ser-301 is a topological domain, cytoplasmic.

It localises to the membrane. This is an uncharacterized protein from Dictyostelium discoideum (Social amoeba).